We begin with the raw amino-acid sequence, 338 residues long: 1-aminocyclopropane-1-carboxylate deaminase (338 aa).

Residue Lys-51 is modified to N6-(pyridoxal phosphate)lysine. Ser-78 (nucleophile) is an active-site residue.

This sequence belongs to the ACC deaminase/D-cysteine desulfhydrase family. As to quaternary structure, homotrimer. The cofactor is pyridoxal 5'-phosphate.

It catalyses the reaction 1-aminocyclopropane-1-carboxylate + H2O = 2-oxobutanoate + NH4(+). In terms of biological role, catalyzes a cyclopropane ring-opening reaction, the irreversible conversion of 1-aminocyclopropane-1-carboxylate (ACC) to ammonia and alpha-ketobutyrate. Allows growth on ACC as a nitrogen source. This chain is 1-aminocyclopropane-1-carboxylate deaminase, found in Burkholderia pseudomallei (strain 1106a).